The primary structure comprises 459 residues: Glycosyl hydrolase family 109 protein (459 aa).

Residues 1–31 (MHNIHRRNFLKAAGAATAGLVTANIALNAYA) constitute a signal peptide (tat-type signal). NAD(+)-binding positions include 64–65 (ER), Asp-86, 135–138 (WEWH), 155–156 (EV), and Asn-184. Residues Tyr-213, Arg-232, 244–247 (YPTH), and Tyr-326 contribute to the substrate site. Tyr-244 lines the NAD(+) pocket.

It belongs to the Gfo/Idh/MocA family. Glycosyl hydrolase 109 subfamily. The cofactor is NAD(+). Predicted to be exported by the Tat system. The position of the signal peptide cleavage has not been experimentally proven.

In terms of biological role, glycosidase. The polypeptide is Glycosyl hydrolase family 109 protein (Shewanella baltica (strain OS155 / ATCC BAA-1091)).